The chain runs to 395 residues: MSWKTLDDMDVAGKRVLLRVDINVPVEEGQVTDRTRIDRIIPTLQDILAKGGTPIMLAHFGRPKGKVVPEMSLRVTLPALEAALGRKVTFIEEPNAERLSDLPEGIVVLLENTRFAVGEEANDPEMARFLATLGDVFCNDAFSAAHRAHASTTGVAHLLPSCAGRLMQAELSALEAALSTPQRPVGAVVGGAKVSTKIALLENLVARLDVLVIGGGMANTFLAAQGAKLGASLMEPDYMETARTIMQSAERAGCKLLLPVDGVVAREFKAGADFEVVALGKDTVLAEDQMVLDAGPQSVAAVMAAFRTLKTLIWNGPLGAFEITPFNQATNATALEAARLTKSGALISVAGGGDTVAALNQAGAAADFTYISTAGGAFLEWMEGKTLPGVAALQG.

Substrate contacts are provided by residues 21–23, arginine 36, 59–62, arginine 114, and arginine 147; these read DIN and HFGR. Residues lysine 197, glutamate 322, and 352–355 each bind ATP; that span reads GGDT.

It belongs to the phosphoglycerate kinase family. Monomer.

It localises to the cytoplasm. The catalysed reaction is (2R)-3-phosphoglycerate + ATP = (2R)-3-phospho-glyceroyl phosphate + ADP. It participates in carbohydrate degradation; glycolysis; pyruvate from D-glyceraldehyde 3-phosphate: step 2/5. In Roseobacter denitrificans (strain ATCC 33942 / OCh 114) (Erythrobacter sp. (strain OCh 114)), this protein is Phosphoglycerate kinase.